Here is a 340-residue protein sequence, read N- to C-terminus: Glyceraldehyde-3-phosphate dehydrogenase (340 aa).

NAD(+) contacts are provided by residues 11 to 12 and Gly-111; that span reads SI. 140–142 lines the D-glyceraldehyde 3-phosphate pocket; sequence SCN. Catalysis depends on Cys-141, which acts as the Nucleophile. NAD(+) is bound at residue Arg-169. 195-196 provides a ligand contact to D-glyceraldehyde 3-phosphate; sequence HG. Gln-303 contributes to the NAD(+) binding site.

It belongs to the glyceraldehyde-3-phosphate dehydrogenase family. In terms of assembly, homotetramer.

The protein localises to the cytoplasm. The catalysed reaction is D-glyceraldehyde 3-phosphate + phosphate + NADP(+) = (2R)-3-phospho-glyceroyl phosphate + NADPH + H(+). It carries out the reaction D-glyceraldehyde 3-phosphate + phosphate + NAD(+) = (2R)-3-phospho-glyceroyl phosphate + NADH + H(+). It participates in carbohydrate degradation; glycolysis; pyruvate from D-glyceraldehyde 3-phosphate: step 1/5. The protein is Glyceraldehyde-3-phosphate dehydrogenase of Methanococcus vannielii (strain ATCC 35089 / DSM 1224 / JCM 13029 / OCM 148 / SB).